We begin with the raw amino-acid sequence, 756 residues long: Alpha-1,2-mannosyltransferase MNN26 (756 aa).

Residues 1-10 (MSLRRLSPSH) lie on the Cytoplasmic side of the membrane. A helical membrane pass occupies residues 11 to 31 (LILGTLVLGVIIFNLYVLTST). Topologically, residues 32 to 756 (HEDIKKVKGP…NGKNKQGAAS (725 aa)) are extracellular. Over residues 723-734 (LGEKSQPKQPEI) the composition is skewed to polar residues. The segment at 723–756 (LGEKSQPKQPEINNNNNNNNNDDDNGKNKQGAAS) is disordered.

This sequence belongs to the MNN1/MNT family.

The protein localises to the golgi apparatus membrane. It functions in the pathway protein modification; protein glycosylation. Functionally, alpha-1,2-mannosyltransferase required for cell wall integrity. Responsible for addition of the first alpha-1,2-linked mannose to form the branches on the mannan backbone of oligosaccharides. Addition of alpha-1,2-mannose is required for stabilization of the alpha-1,6-mannose backbone and hence regulates mannan fibril length; and is important for both immune recognition and virulence. The sequence is that of Alpha-1,2-mannosyltransferase MNN26 (MNN26) from Candida albicans (strain SC5314 / ATCC MYA-2876) (Yeast).